A 358-amino-acid polypeptide reads, in one-letter code: Ubiquitin thioesterase OTU1 (358 aa).

A Ubiquitin-like domain is found at 5 to 87; the sequence is FSVKLKSKKG…LIVEEKAGAA (83 aa). A UBX-like region spans residues 8-94; the sequence is KLKSKKGQFI…GAAGPTSTPL (87 aa). The interval 83–108 is disordered; that stretch reads KAGAAGPTSTPLASGSGSSTMEDDEA. The span at 89-102 shows a compositional bias: polar residues; the sequence is PTSTPLASGSGSST. The 125-residue stretch at 161-285 folds into the OTU domain; the sequence is LLKKVVPADN…GIHYDPLYME (125 aa). Residues 166-172 form a cys-loop region; sequence VPADNSC. D169 is a catalytic residue. C172 (nucleophile) is an active-site residue. Residues 224–234 are variable-loop; it reads IQKADSWGGAI. Positions 274–278 are his-loop; it reads FDGIH. Substrate is bound at residue I277. H278 is an active-site residue. The segment at 301 to 306 is S2 site; it reads MGVYQQ. The C2H2-type zinc finger occupies 328-352; sequence LRCMDCDVMLVGQGQAQEHAKKTGH. H352 is an active-site residue.

It catalyses the reaction Thiol-dependent hydrolysis of ester, thioester, amide, peptide and isopeptide bonds formed by the C-terminal Gly of ubiquitin (a 76-residue protein attached to proteins as an intracellular targeting signal).. In terms of biological role, hydrolase that can remove conjugated ubiquitin from proteins and may therefore play an important regulatory role at the level of protein turnover by preventing degradation. The polypeptide is Ubiquitin thioesterase OTU1 (Drosophila pseudoobscura pseudoobscura (Fruit fly)).